The primary structure comprises 480 residues: Ribosome assembly protein rrb1 (480 aa).

2 disordered regions span residues 1 to 78 and 155 to 176; these read MSKR…WLPG and QHDE…ILEH. 2 stretches are compositionally biased toward acidic residues: residues 28–52 and 158–172; these read VDTE…YIEA and ENDD…EEDP. Phosphoserine is present on residues S163 and S166. 5 WD repeats span residues 183–225, 289–329, 334–375, 385–425, and 446–480; these read GACN…RSLD, SHTA…KTSA, AHPG…SSSS, WHRA…DEEE, and MGQQ…TITF.

As to quaternary structure, associates with ribosomal protein L3.

Its subcellular location is the cytoplasm. It is found in the nucleus. The protein resides in the nucleolus. Its function is as follows. Involved in regulation of L3 expression and stability and plays a role in early 60S ribosomal subunit assembly. May be required for proper assembly of pre-ribosomal particles during early ribosome biogenesis, presumably by targeting L3 onto the 35S precursor rRNA. In Schizosaccharomyces pombe (strain 972 / ATCC 24843) (Fission yeast), this protein is Ribosome assembly protein rrb1 (rrb1).